Consider the following 113-residue polypeptide: Gamma-glutamylcyclotransferase family protein YtfP (113 aa).

Belongs to the gamma-glutamylcyclotransferase family.

This chain is Gamma-glutamylcyclotransferase family protein YtfP (ytfP), found in Escherichia coli O157:H7.